Reading from the N-terminus, the 350-residue chain is MAGVKSLQPRLISSFLGNNSIRSTQPLIHLFRFDLGRRHVSMQLSRTFSGLTDLLFNRRNEDEVIDGKRKRLRPGNVSPRRPVPGHITKPPYVDSLQAPGISSGLEVHDKKGIECMRASGILAARVRDYAGTLVKPGVTTDEIDEAVHNMIIENGAYPSPLGYGGFPKSVCTSVNECICHGIPDSRPLEDGDIINIDVTVYLNGYHGDTSATFFCGNVDEKAKKLVEVTKESLDKAISICGPGVEYKKIGKVIHDLADKHKYGVVRQFVGHGVGSVFHADPVVLHFRNNEAGRMVLNQTFTIEPMLTIGSRNPIMWDDNWTVVTEDASLSAQFEHTILITKDGAEILTKC.

Residues 1-49 (MAGVKSLQPRLISSFLGNNSIRSTQPLIHLFRFDLGRRHVSMQLSRTFS) constitute a chloroplast and mitochondrion transit peptide. The residue at position 50 (Gly-50) is an N-acetylglycine. Residues 71-90 (RLRPGNVSPRRPVPGHITKP) are disordered. His-180 contacts substrate. Residues Asp-197, Asp-208, and His-271 each coordinate a divalent metal cation. His-278 serves as a coordination point for substrate. A divalent metal cation contacts are provided by Glu-303 and Glu-334.

The protein belongs to the peptidase M24A family. Methionine aminopeptidase type 1 subfamily. Requires Co(2+) as cofactor. Zn(2+) serves as cofactor. The cofactor is Mn(2+). It depends on Fe(2+) as a cofactor. In terms of tissue distribution, ubiquitous. Preferentially expressed in green tissues.

The protein resides in the plastid. It localises to the chloroplast. It is found in the mitochondrion. The enzyme catalyses Release of N-terminal amino acids, preferentially methionine, from peptides and arylamides.. Removes the N-terminal methionine from nascent proteins. The N-terminal methionine is often cleaved when the second residue in the primary sequence is small and uncharged (Met-Ala-, Cys, Gly, Pro, Ser, Thr, or Val). This is Methionine aminopeptidase 1D, chloroplastic/mitochondrial (MAP1D) from Arabidopsis thaliana (Mouse-ear cress).